Consider the following 510-residue polypeptide: MFIEKFRVESPNVKYGDGEIESVYSYETTELVHEVRNGSYQWVVKPKSVQYQFKTDTRVPRLGVMLVGWGGNNGSTLTAGVIANREGISWVTKEKVQQANYFGSLTQSSSIRVGSFNGEEIYAPFKSLLPMVNPDEIVFGGWDISDMNLADAMGRAKVLDIDLQKQLRPYMESMVPLPGIYNPDFIAANQGSRANNVIKGPKKQQVQRIIDDIREFKEREKVEKVVVLWTANTERYSDLVVGLNDTMENLLAAVERDEAEISPSSLYALACIMEGVPFVNGSPQNTFVPGLIEMAIKRNSLIGGDDFKSGQTKMKSVLVDFLVGAGIKPTSIVSYNHLGNNDGMNLSAPQTFRSKEISKSNVVDDMVSSNGILYEPGEHPDHVIVIKYVPYVGDSKRAMDEYTSEIFMGGKSTIILHNTCEDSLLAAPIILDLVLLAELSTRIQLKAEGESKFHSFHPVASILSYLSKAPLVPPGTPVVNALSKQRAMLENILRACVGLAPENNMILEYK.

24 residues coordinate NAD(+): G70, G71, N72, N73, D143, I180, Q190, R193, T230, A231, N232, T233, G281, S282, D306, S309, N340, N341, D342, K355, G393, D394, D422, and S423.

The protein belongs to the myo-inositol 1-phosphate synthase family. Requires NAD(+) as cofactor.

It localises to the cytoplasm. The protein resides in the cytosol. Its subcellular location is the nucleus. It carries out the reaction D-glucose 6-phosphate = 1D-myo-inositol 3-phosphate. It functions in the pathway polyol metabolism; myo-inositol biosynthesis; myo-inositol from D-glucose 6-phosphate: step 1/2. Key enzyme in myo-inositol biosynthesis pathway that catalyzes the conversion of glucose 6-phosphate to 1-myo-inositol 1-phosphate in a NAD-dependent manner. The protein is Inositol-3-phosphate synthase (TUR1) of Spirodela polyrhiza (Giant duckweed).